We begin with the raw amino-acid sequence, 129 residues long: Large ribosomal subunit protein bL19 (129 aa).

The protein belongs to the bacterial ribosomal protein bL19 family.

In terms of biological role, this protein is located at the 30S-50S ribosomal subunit interface and may play a role in the structure and function of the aminoacyl-tRNA binding site. In Granulibacter bethesdensis (strain ATCC BAA-1260 / CGDNIH1), this protein is Large ribosomal subunit protein bL19.